A 326-amino-acid polypeptide reads, in one-letter code: Lipoyl synthase (326 aa).

[4Fe-4S] cluster-binding residues include C74, C79, C85, C100, C104, C107, and S314. Residues 85–303 (CFGKGTATFM…EEEAYKMGFT (219 aa)) form the Radical SAM core domain.

It belongs to the radical SAM superfamily. Lipoyl synthase family. Requires [4Fe-4S] cluster as cofactor.

The protein resides in the cytoplasm. It catalyses the reaction [[Fe-S] cluster scaffold protein carrying a second [4Fe-4S](2+) cluster] + N(6)-octanoyl-L-lysyl-[protein] + 2 oxidized [2Fe-2S]-[ferredoxin] + 2 S-adenosyl-L-methionine + 4 H(+) = [[Fe-S] cluster scaffold protein] + N(6)-[(R)-dihydrolipoyl]-L-lysyl-[protein] + 4 Fe(3+) + 2 hydrogen sulfide + 2 5'-deoxyadenosine + 2 L-methionine + 2 reduced [2Fe-2S]-[ferredoxin]. It participates in protein modification; protein lipoylation via endogenous pathway; protein N(6)-(lipoyl)lysine from octanoyl-[acyl-carrier-protein]: step 2/2. Its function is as follows. Catalyzes the radical-mediated insertion of two sulfur atoms into the C-6 and C-8 positions of the octanoyl moiety bound to the lipoyl domains of lipoate-dependent enzymes, thereby converting the octanoylated domains into lipoylated derivatives. The polypeptide is Lipoyl synthase (Delftia acidovorans (strain DSM 14801 / SPH-1)).